A 108-amino-acid polypeptide reads, in one-letter code: Ribulose bisphosphate carboxylase small subunit (108 aa).

Belongs to the RuBisCO small chain family. In terms of assembly, heterohexadecamer of 8 large and 8 small subunits.

RuBisCO catalyzes two reactions: the carboxylation of D-ribulose 1,5-bisphosphate, the primary event in carbon dioxide fixation, as well as the oxidative fragmentation of the pentose substrate. Both reactions occur simultaneously and in competition at the same active site. Although the small subunit is not catalytic it is essential for maximal activity. The protein is Ribulose bisphosphate carboxylase small subunit of Nitrobacter vulgaris.